Here is a 461-residue protein sequence, read N- to C-terminus: tRNA modification GTPase MnmE (461 aa).

Residues arginine 21, glutamate 87, and lysine 126 each coordinate (6S)-5-formyl-5,6,7,8-tetrahydrofolate. The TrmE-type G domain occupies 222-384; the sequence is QSTVVLYGEP…LLELLKSKLT (163 aa). Asparagine 232 contacts K(+). GTP is bound by residues 232–237, 251–257, and 276–279; these read NTGKSS, SDVPGTT, and DTAG. Residue serine 236 coordinates Mg(2+). 3 residues coordinate K(+): serine 251, valine 253, and threonine 256. Threonine 257 serves as a coordination point for Mg(2+). Lysine 461 provides a ligand contact to (6S)-5-formyl-5,6,7,8-tetrahydrofolate.

It belongs to the TRAFAC class TrmE-Era-EngA-EngB-Septin-like GTPase superfamily. TrmE GTPase family. Homodimer. Heterotetramer of two MnmE and two MnmG subunits. Requires K(+) as cofactor.

The protein resides in the cytoplasm. Its function is as follows. Exhibits a very high intrinsic GTPase hydrolysis rate. Involved in the addition of a carboxymethylaminomethyl (cmnm) group at the wobble position (U34) of certain tRNAs, forming tRNA-cmnm(5)s(2)U34. This Leptospira biflexa serovar Patoc (strain Patoc 1 / Ames) protein is tRNA modification GTPase MnmE.